The primary structure comprises 374 residues: Isopentenyl-diphosphate delta-isomerase (374 aa).

Residue 13 to 14 (RK) coordinates substrate. FMN-binding positions include 71-73 (GMT), Ser-104, and Asn-132. Residue 104 to 106 (SQR) coordinates substrate. A substrate-binding site is contributed by Gln-171. Mg(2+) is bound at residue Glu-172. FMN-binding positions include Lys-203, Thr-233, 282–284 (GMR), and 303–304 (AL).

It belongs to the IPP isomerase type 2 family. Homooctamer. Dimer of tetramers. It depends on FMN as a cofactor. The cofactor is NADPH. Requires Mg(2+) as cofactor.

The protein localises to the cytoplasm. The catalysed reaction is isopentenyl diphosphate = dimethylallyl diphosphate. Involved in the biosynthesis of isoprenoids. Catalyzes the 1,3-allylic rearrangement of the homoallylic substrate isopentenyl (IPP) to its allylic isomer, dimethylallyl diphosphate (DMAPP). This is Isopentenyl-diphosphate delta-isomerase from Thermococcus onnurineus (strain NA1).